Consider the following 430-residue polypeptide: UDP-N-acetylglucosamine 1-carboxyvinyltransferase (430 aa).

22–23 serves as a coordination point for phosphoenolpyruvate; it reads KN. R102 contacts UDP-N-acetyl-alpha-D-glucosamine. C126 (proton donor) is an active-site residue. Residue C126 is modified to 2-(S-cysteinyl)pyruvic acid O-phosphothioketal. UDP-N-acetyl-alpha-D-glucosamine is bound by residues 131 to 135, 172 to 175, D317, and I339; these read RPVDL and KVSV.

It belongs to the EPSP synthase family. MurA subfamily.

Its subcellular location is the cytoplasm. It catalyses the reaction phosphoenolpyruvate + UDP-N-acetyl-alpha-D-glucosamine = UDP-N-acetyl-3-O-(1-carboxyvinyl)-alpha-D-glucosamine + phosphate. The protein operates within cell wall biogenesis; peptidoglycan biosynthesis. Functionally, cell wall formation. Adds enolpyruvyl to UDP-N-acetylglucosamine. This chain is UDP-N-acetylglucosamine 1-carboxyvinyltransferase, found in Sinorhizobium medicae (strain WSM419) (Ensifer medicae).